Reading from the N-terminus, the 303-residue chain is UDP-3-O-acyl-N-acetylglucosamine deacetylase (303 aa).

Zn(2+)-binding residues include His78, His237, and Asp241. The active-site Proton donor is the His264.

This sequence belongs to the LpxC family. Zn(2+) serves as cofactor.

The enzyme catalyses a UDP-3-O-[(3R)-3-hydroxyacyl]-N-acetyl-alpha-D-glucosamine + H2O = a UDP-3-O-[(3R)-3-hydroxyacyl]-alpha-D-glucosamine + acetate. It participates in glycolipid biosynthesis; lipid IV(A) biosynthesis; lipid IV(A) from (3R)-3-hydroxytetradecanoyl-[acyl-carrier-protein] and UDP-N-acetyl-alpha-D-glucosamine: step 2/6. Functionally, catalyzes the hydrolysis of UDP-3-O-myristoyl-N-acetylglucosamine to form UDP-3-O-myristoylglucosamine and acetate, the committed step in lipid A biosynthesis. In Pseudomonas fluorescens (strain ATCC BAA-477 / NRRL B-23932 / Pf-5), this protein is UDP-3-O-acyl-N-acetylglucosamine deacetylase.